Here is a 137-residue protein sequence, read N- to C-terminus: NADPH-dependent 7-cyano-7-deazaguanine reductase (137 aa).

C45 acts as the Thioimide intermediate in catalysis. D52 serves as the catalytic Proton donor. Substrate-binding positions include 68-70 (VEL) and 87-88 (QE).

The protein belongs to the GTP cyclohydrolase I family. QueF type 1 subfamily.

The protein localises to the cytoplasm. It carries out the reaction 7-aminomethyl-7-carbaguanine + 2 NADP(+) = 7-cyano-7-deazaguanine + 2 NADPH + 3 H(+). The protein operates within tRNA modification; tRNA-queuosine biosynthesis. In terms of biological role, catalyzes the NADPH-dependent reduction of 7-cyano-7-deazaguanine (preQ0) to 7-aminomethyl-7-deazaguanine (preQ1). The sequence is that of NADPH-dependent 7-cyano-7-deazaguanine reductase from Thermotoga petrophila (strain ATCC BAA-488 / DSM 13995 / JCM 10881 / RKU-1).